The following is a 489-amino-acid chain: Cytochrome P450 2C70 (489 aa).

Positions Met-1–Gly-27 are cleaved as a signal peptide. Heme is bound at residue Cys-434.

This sequence belongs to the cytochrome P450 family. Heme is required as a cofactor. In terms of tissue distribution, expressed in liver.

It localises to the endoplasmic reticulum membrane. It is found in the microsome membrane. The catalysed reaction is chenodeoxycholate + reduced [NADPH--hemoprotein reductase] + O2 = alpha-muricholate + oxidized [NADPH--hemoprotein reductase] + H2O + H(+). The enzyme catalyses ursodeoxycholate + reduced [NADPH--hemoprotein reductase] + O2 = beta-muricholate + oxidized [NADPH--hemoprotein reductase] + H2O + H(+). A cytochrome P450 monooxygenase involved in muricholic acid (MCA) synthesis. Hydroxylates at the 6-beta position two major bile acids, chenodeoxycholic acid (CDCA) and ursodeoxycholic acid (UDCA) to form alpha-MCA and beta-MCA, respectively. May regulate NR1H4/farnesoid X receptor signaling, as taurine-conjugated MCAs are antagonists of NR1H4. Mechanistically, uses molecular oxygen inserting one oxygen atom into a substrate, and reducing the second into a water molecule, with two electrons provided by NADPH via cytochrome P450 reductase (CPR; NADPH-ferrihemoprotein reductase). The polypeptide is Cytochrome P450 2C70 (Mus musculus (Mouse)).